Consider the following 238-residue polypeptide: Fibroblast growth factor-binding protein 1 (238 aa).

The signal sequence occupies residues 1–20 (MRIHGLILLSFLLLAAQVLS). The tract at residues 25 to 61 (KTAKNVPDSTTEEDMSPSLGKARNKQRSRTSKSMTHG) is disordered. Cystine bridges form between Cys-71–Cys-88, Cys-97–Cys-130, and Cys-106–Cys-142. Ser-164 carries O-linked (GalNAc...) serine glycosylation. Residues 197–238 (KDSECLEDPDVLTQRKTALEFCGESWSSFCTFFLNMLQATSC) form a sufficient for interaction with FGF2 and FGF2-induced effects region. Cystine bridges form between Cys-201-Cys-238 and Cys-218-Cys-226.

Belongs to the fibroblast growth factor-binding protein family. Found in a complex with FGFBP1, FGF1 and FGF2. Interacts with FGF1, FGF2, FGF7, FGF10, FGF22 and HSPG2. As to expression, expressed in gut, eye, thymus, skin, lung, tongue, Purkinje cells and cerebral chorioid plexus (at protein level).

It is found in the secreted. The protein resides in the extracellular space. It localises to the cell membrane. In terms of biological role, acts as a carrier protein that release fibroblast-binding factors (FGFs) from the extracellular matrix (EM) storage and thus enhance the mitogenic activity of FGFs. Enhances FGF2 signaling during tissue repair, angiogenesis and in tumor growth. This Rattus norvegicus (Rat) protein is Fibroblast growth factor-binding protein 1 (Fgfbp1).